Here is a 235-residue protein sequence, read N- to C-terminus: Ribitol-5-phosphate cytidylyltransferase (235 aa).

Residues 7–10, 82–88, and serine 113 each bind CTP; these read LAGG and GADRNTS.

This sequence belongs to the IspD/TarI cytidylyltransferase family. TarI subfamily.

The catalysed reaction is D-ribitol 5-phosphate + CTP + H(+) = CDP-L-ribitol + diphosphate. Its pathway is cell wall biogenesis; poly(ribitol phosphate) teichoic acid biosynthesis. Its function is as follows. Catalyzes the transfer of the cytidylyl group of CTP to D-ribitol 5-phosphate. The polypeptide is Ribitol-5-phosphate cytidylyltransferase (Streptococcus pneumoniae serotype 2 (strain D39 / NCTC 7466)).